The following is a 77-amino-acid chain: Cold shock protein YdfK (77 aa).

The protein to E.coli YnaE.

The chain is Cold shock protein YdfK (ydfK) from Escherichia coli (strain K12).